The following is a 484-amino-acid chain: Protein DETOXIFICATION 33 (484 aa).

The segment covering 1–16 has biased composition (basic and acidic residues); the sequence is MGKDKTLPLLDPREPP. The segment at 1-22 is disordered; that stretch reads MGKDKTLPLLDPREPPELTGTK. 12 helical membrane-spanning segments follow: residues 39–59, 81–101, 122–142, 155–175, 190–210, 218–238, 267–287, 294–314, 338–358, 380–400, 409–429, and 439–459; these read LWELAGPAIFTAISQYSLGAL, VISGLAFGVMLGMGSALETLC, VILFTTALFLLPVYIWAPPIL, AGKFALWMIPQLFAYAANFPI, WISGVVLVIHAVFSWLFILYF, AITLNTSWWLIVIGQLLYILI, ALMLCLEFWYLMVLVVVTGLL, VDAISICMNIEGWTAMISIGF, VIVVSITSTLIGIVCMIVVLA, IAVLLGFTVLLNSLQPVLSGV, LVAYVNIACYYIIGLPAGLVL, and GIWGGMVAGICLQTLILIGII.

This sequence belongs to the multi antimicrobial extrusion (MATE) (TC 2.A.66.1) family.

It localises to the membrane. In Arabidopsis thaliana (Mouse-ear cress), this protein is Protein DETOXIFICATION 33.